The sequence spans 176 residues: Ribosome rescue factor SmrB (176 aa).

The Smr domain occupies Leu97–Ser172.

This sequence belongs to the SmrB family. Associates with collided ribosomes, but not with correctly translating polysomes.

In terms of biological role, acts as a ribosome collision sensor. Detects stalled/collided disomes (pairs of ribosomes where the leading ribosome is stalled and a second ribosome has collided with it) and endonucleolytically cleaves mRNA at the 5' boundary of the stalled ribosome. Stalled/collided disomes form a new interface (primarily via the 30S subunits) that binds SmrB. Cleaved mRNA becomes available for tmRNA ligation, leading to ribosomal subunit dissociation and rescue of stalled ribosomes. This Vibrio vulnificus (strain YJ016) protein is Ribosome rescue factor SmrB.